Here is a 156-residue protein sequence, read N- to C-terminus: Small ribosomal subunit protein uS7 (156 aa).

This sequence belongs to the universal ribosomal protein uS7 family. As to quaternary structure, part of the 30S ribosomal subunit. Contacts proteins S9 and S11.

Functionally, one of the primary rRNA binding proteins, it binds directly to 16S rRNA where it nucleates assembly of the head domain of the 30S subunit. Is located at the subunit interface close to the decoding center, probably blocks exit of the E-site tRNA. The polypeptide is Small ribosomal subunit protein uS7 (Mesomycoplasma hyopneumoniae (strain 232) (Mycoplasma hyopneumoniae)).